Reading from the N-terminus, the 552-residue chain is MKSDAIKKGPGKAAQRSLLKALGLTNEEISRPIIGIVSSQNEIIPGHMNLDKITEAVRKGILMSGGTPLAIPTIGVCDGIAMGQEGMKYSLVTRELIADSIECMAKAHAFDALVLIPNCDKIVPGMVMGALRVNVPSVVISGGPMLAGKYKGKDISLTTMFEAVGSYENGTMDEKELCDLEECACPTCGSCSGMFTANSMNCLCEVLGIALPGNGTIPAVFSERIRLAKRAGMAVMDMLKNDIKPRDIINEKSIMNALKADMALGCSTNSVLHITAIANEAKVNMNLDIINDLSSKTPDLCKLAPASNVHIENLYAAGGITAMMNELSKKDILDLDCITVTGKTQGENIKGVTVKDYEVIRPIDNPYSKNGGIAILRGNLAPDGAVVKRAAVLPEMLVHEGPAIVFNSEEEANEAIFNKKINPGDVIVIRYEGPKGGPGMREMLQATAAIAGMGLDDSVALITDGRFSGATRGASIGHVSPEAASGGMIGLIEDGDIISIDINNAKLEVKLSYEEIQRRKLKFKPIEPKVKEGYLARYAKLVSSASEGAILK.

Asp-78 is a Mg(2+) binding site. A [2Fe-2S] cluster-binding site is contributed by Cys-119. Asp-120 and Lys-121 together coordinate Mg(2+). Residue Lys-121 is modified to N6-carboxylysine. Residue Cys-191 participates in [2Fe-2S] cluster binding. Glu-442 lines the Mg(2+) pocket. Ser-468 functions as the Proton acceptor in the catalytic mechanism.

Belongs to the IlvD/Edd family. In terms of assembly, homodimer. The cofactor is [2Fe-2S] cluster. Mg(2+) is required as a cofactor.

The enzyme catalyses (2R)-2,3-dihydroxy-3-methylbutanoate = 3-methyl-2-oxobutanoate + H2O. The catalysed reaction is (2R,3R)-2,3-dihydroxy-3-methylpentanoate = (S)-3-methyl-2-oxopentanoate + H2O. Its pathway is amino-acid biosynthesis; L-isoleucine biosynthesis; L-isoleucine from 2-oxobutanoate: step 3/4. The protein operates within amino-acid biosynthesis; L-valine biosynthesis; L-valine from pyruvate: step 3/4. In terms of biological role, functions in the biosynthesis of branched-chain amino acids. Catalyzes the dehydration of (2R,3R)-2,3-dihydroxy-3-methylpentanoate (2,3-dihydroxy-3-methylvalerate) into 2-oxo-3-methylpentanoate (2-oxo-3-methylvalerate) and of (2R)-2,3-dihydroxy-3-methylbutanoate (2,3-dihydroxyisovalerate) into 2-oxo-3-methylbutanoate (2-oxoisovalerate), the penultimate precursor to L-isoleucine and L-valine, respectively. The protein is Dihydroxy-acid dehydratase of Clostridium botulinum (strain Eklund 17B / Type B).